We begin with the raw amino-acid sequence, 255 residues long: MPLELVTVPCLSDNYAFLVHDAGTGETSVVDVPEAGPILKALEERGWHLSQILLTHHHSDHVAGVEELRAATGARVAGAAADAHRLPPLDLELAEGDLVRVGASEGRVIEVPGHTVGHIAFHFPDSSLAFTGDSLMAMGCGRLFEGTAEAMWQSLRKLSALPPETMICSGHEYAASNARFAATLEPDSPMLIFRVGSIAAARKEGRPTVPSHLSDEIATNPFLRAGEASLKAAVGMVDAEDAEVFAEIRRRKDKF.

7 residues coordinate Zn(2+): His-56, His-58, Asp-60, His-61, His-114, Asp-133, and His-171.

Belongs to the metallo-beta-lactamase superfamily. Glyoxalase II family. As to quaternary structure, monomer. Zn(2+) serves as cofactor.

The catalysed reaction is an S-(2-hydroxyacyl)glutathione + H2O = a 2-hydroxy carboxylate + glutathione + H(+). It functions in the pathway secondary metabolite metabolism; methylglyoxal degradation; (R)-lactate from methylglyoxal: step 2/2. In terms of biological role, thiolesterase that catalyzes the hydrolysis of S-D-lactoyl-glutathione to form glutathione and D-lactic acid. The chain is Hydroxyacylglutathione hydrolase from Cereibacter sphaeroides (strain ATCC 17023 / DSM 158 / JCM 6121 / CCUG 31486 / LMG 2827 / NBRC 12203 / NCIMB 8253 / ATH 2.4.1.) (Rhodobacter sphaeroides).